Here is a 459-residue protein sequence, read N- to C-terminus: Ribulose bisphosphate carboxylase large chain (459 aa).

An N6,N6,N6-trimethyllysine modification is found at Lys-4. Asn-113 and Thr-163 together coordinate substrate. Lys-165 acts as the Proton acceptor in catalysis. Substrate is bound at residue Lys-167. Lys-191, Asp-193, and Glu-194 together coordinate Mg(2+). The residue at position 191 (Lys-191) is an N6-carboxylysine. The active-site Proton acceptor is His-284. Substrate contacts are provided by Arg-285, His-317, and Ser-369.

It belongs to the RuBisCO large chain family. Type I subfamily. In terms of assembly, heterohexadecamer of 8 large chains and 8 small chains; disulfide-linked. The disulfide link is formed within the large subunit homodimers. Mg(2+) is required as a cofactor. The disulfide bond which can form in the large chain dimeric partners within the hexadecamer appears to be associated with oxidative stress and protein turnover.

The protein localises to the plastid. It localises to the chloroplast. It carries out the reaction 2 (2R)-3-phosphoglycerate + 2 H(+) = D-ribulose 1,5-bisphosphate + CO2 + H2O. The catalysed reaction is D-ribulose 1,5-bisphosphate + O2 = 2-phosphoglycolate + (2R)-3-phosphoglycerate + 2 H(+). RuBisCO catalyzes two reactions: the carboxylation of D-ribulose 1,5-bisphosphate, the primary event in carbon dioxide fixation, as well as the oxidative fragmentation of the pentose substrate in the photorespiration process. Both reactions occur simultaneously and in competition at the same active site. The polypeptide is Ribulose bisphosphate carboxylase large chain (Cephalotus follicularis (Albany pitcher plant)).